We begin with the raw amino-acid sequence, 292 residues long: NADH-cytochrome b5 reductase 1 (292 aa).

Residues 12-32 (ALLVVGTAIFAVLVGAKFLGG) form a helical membrane-spanning segment. Positions 43–148 (TEFQNFVLKE…RGPKGAMVYT (106 aa)) constitute an FAD-binding FR-type domain. FAD-binding positions include 128-143 (TTLK…GPKG) and 154-191 (HIGM…QVDL).

Belongs to the flavoprotein pyridine nucleotide cytochrome reductase family. Monomer. Component of the 2-(3-amino-3-carboxypropyl)histidine synthase complex composed of dph1, dph2, dph3 and a NADH-dependent reductase, predominantly cbr1. The cofactor is FAD.

The protein resides in the mitochondrion outer membrane. The enzyme catalyses 2 Fe(III)-[cytochrome b5] + NADH = 2 Fe(II)-[cytochrome b5] + NAD(+) + H(+). It catalyses the reaction 2 Fe(3+)-[Dph3] + NADH = 2 Fe(2+)-[Dph3] + NAD(+) + H(+). The protein operates within protein modification; peptidyl-diphthamide biosynthesis. NADH-dependent reductase for dph3 and cytochrome b5. Required for the first step of diphthamide biosynthesis, a post-translational modification of histidine which occurs in elongation factor 2. Dph1 and dph2 transfer a 3-amino-3-carboxypropyl (ACP) group from S-adenosyl-L-methionine (SAM) to a histidine residue, the reaction is assisted by a reduction system comprising dph3 and a NADH-dependent reductase, predominantly cbr1. By reducing dph3, also involved in the formation of the tRNA wobble base modification mcm5s 2U (5-methoxycarbonylmethyl-2-thiouridine), mediated by the elongator complex. The cytochrome b5/NADH cytochrome b5 reductase electron transfer system supports the catalytic activity of several sterol biosynthetic enzymes. This is NADH-cytochrome b5 reductase 1 (cbr1) from Aspergillus oryzae (strain ATCC 42149 / RIB 40) (Yellow koji mold).